We begin with the raw amino-acid sequence, 358 residues long: Probable dual-specificity RNA methyltransferase RlmN 2 (358 aa).

Glu90 acts as the Proton acceptor in catalysis. A Radical SAM core domain is found at 96–328 (SGIRRTVCVS…VNTCRYTKGD (233 aa)). Cys103 and Cys334 are joined by a disulfide. 3 residues coordinate [4Fe-4S] cluster: Cys110, Cys114, and Cys117. Residues 160–161 (GE), Ser192, 215–217 (SLH), and Asn291 contribute to the S-adenosyl-L-methionine site. Cys334 (S-methylcysteine intermediate) is an active-site residue.

Belongs to the radical SAM superfamily. RlmN family. The cofactor is [4Fe-4S] cluster.

It localises to the cytoplasm. The enzyme catalyses adenosine(2503) in 23S rRNA + 2 reduced [2Fe-2S]-[ferredoxin] + 2 S-adenosyl-L-methionine = 2-methyladenosine(2503) in 23S rRNA + 5'-deoxyadenosine + L-methionine + 2 oxidized [2Fe-2S]-[ferredoxin] + S-adenosyl-L-homocysteine. The catalysed reaction is adenosine(37) in tRNA + 2 reduced [2Fe-2S]-[ferredoxin] + 2 S-adenosyl-L-methionine = 2-methyladenosine(37) in tRNA + 5'-deoxyadenosine + L-methionine + 2 oxidized [2Fe-2S]-[ferredoxin] + S-adenosyl-L-homocysteine. Specifically methylates position 2 of adenine 2503 in 23S rRNA and position 2 of adenine 37 in tRNAs. This is Probable dual-specificity RNA methyltransferase RlmN 2 from Protochlamydia amoebophila (strain UWE25).